Consider the following 429-residue polypeptide: Trigger factor (429 aa).

One can recognise a PPIase FKBP-type domain in the interval 161-246 (EDRVTIDFTG…LKKVEERELP (86 aa)).

The protein belongs to the FKBP-type PPIase family. Tig subfamily. In terms of assembly, homodimer and monomer. In vivo most of the ribosomes are in complex with monomeric TF. Uncomplexed TF, however, is in a monomer-dimer equilibrium with approximately two thirds of TF existing in a dimeric state.

The protein localises to the cytoplasm. The catalysed reaction is [protein]-peptidylproline (omega=180) = [protein]-peptidylproline (omega=0). Involved in protein export. Acts as a chaperone by maintaining the newly synthesized protein in an open conformation. Functions as a peptidyl-prolyl cis-trans isomerase. This is Trigger factor from Escherichia coli O45:K1 (strain S88 / ExPEC).